The following is a 699-amino-acid chain: MNPIVKSFEYGQHTVTLETGVIARQADGAVMASMGDTTVLVTVVGKKEADPGRDFFPLTVNYQEKTYAAGKIPGGFFKREGRPSEDETLIARLIDRPIRPLFPDDFTNEVQVIITVVSVDPQIEPDIVSMIGTSAALAISGIPFNGPLGAARVGYVNGEYVLNPGAAELAGSELDLVVAGTQSAVLMVESEAKSLPEEVMLGAVVYGHDQQQVVINAINEFAAEAGKPRWNWTAPVKNEALVAQIKELAEEGLTAAYQIMAKQERYEAVGEVKKATIAKLQEANPDVNVREAADLLGSLEKNVVRGRIIAGMPRIDGREPDMIRALSVMAGVLPRTHGSALFTRGETQALVTCTLGTERDAQKIDSIMGERTNRFMLHYNFPPYSVGETGMVGSPKRREIGHGKLAWRGINAVMPSAEEFPYSVRVVSEITESNGSSSMASVCGTSLALMDAGVPIKTSVAGIAMGLVKEGDNFVVLSDILGDEDHLGDMDFKVAGTRDGVTALQMDIKIEGITKEIMEIALQQAYGARVHILNVMDQAIGSARPDISDFAPRITTIKINPEKIRDVIGKGGAVIRALTEETGTTIELEDDGTVKIASNNGDATREAIRRIEEITSEVEVGRLYTGKVIRIVDFGAFVNILPGKDGLVHISQISDERVANVSDHLQLNQEVTVKVMEVDRQGRVRLSIKEAQVKEPAAE.

Residues aspartate 485 and aspartate 491 each contribute to the Mg(2+) site. One can recognise a KH domain in the interval 552-611 (PRITTIKINPEKIRDVIGKGGAVIRALTEETGTTIELEDDGTVKIASNNGDATREAIRRI). The region spanning 621-689 (GRLYTGKVIR…RQGRVRLSIK (69 aa)) is the S1 motif domain.

This sequence belongs to the polyribonucleotide nucleotidyltransferase family. As to quaternary structure, component of the RNA degradosome, which is a multiprotein complex involved in RNA processing and mRNA degradation. Mg(2+) is required as a cofactor.

It localises to the cytoplasm. It carries out the reaction RNA(n+1) + phosphate = RNA(n) + a ribonucleoside 5'-diphosphate. Involved in mRNA degradation. Catalyzes the phosphorolysis of single-stranded polyribonucleotides processively in the 3'- to 5'-direction. This Shewanella amazonensis (strain ATCC BAA-1098 / SB2B) protein is Polyribonucleotide nucleotidyltransferase.